The sequence spans 81 residues: Large ribosomal subunit protein bL31B (81 aa).

It belongs to the bacterial ribosomal protein bL31 family. Type B subfamily. Part of the 50S ribosomal subunit.

This chain is Large ribosomal subunit protein bL31B, found in Bacillus anthracis (strain A0248).